The chain runs to 505 residues: MEKLQYELQGYLEIERYRKQRFLYPLLFREYIYALAHDHGLNSSIFYEPTENLGYDNDNKSSSLIVKRLITRLHQQNHLTISVNDSRFVGPNRSFYSQTIPEGFAGIMEIPFSMRLVSSLERLTKYQNFRSIHSIFSFLEDKLSHLYYVSDILIPHPIHLEILLQTLRTRIRDAPSLHLLRCFLHEHNNWNSLITLNKSISIFSKENQRLFLFLYNSHVYECESVLVFLRKQSSHLRSISSLAFLERTHFYGKIKHLVVTLRNDSQRTLPLWFFKEPLMHYVRYQGKSIMASRCTNLLMKKWKYYLVNFWQCHFHLWSQPGGIHINELSNHSFHFLGYLSGVRLTPWVIRSQMLEDSFMIDTAIKRFDTIVPIFPLIGSLVKAKFCNVSGYPISKSVWADSSDSDIIARFGWICTNLSHYHSGSSKKHSLCRIKNILRLSCARTLARKHKSTVRAICKRLGXKLLEEFFTEEHEIVSFIFRRTRLRSERIWYLDIIRINGLVPHS.

Belongs to the intron maturase 2 family. MatK subfamily.

The protein localises to the plastid. The protein resides in the chloroplast. Its function is as follows. Usually encoded in the trnK tRNA gene intron. Probably assists in splicing its own and other chloroplast group II introns. This Barclaya longifolia (Orchid lily) protein is Maturase K.